Here is a 343-residue protein sequence, read N- to C-terminus: L-threonine 3-dehydrogenase (343 aa).

Cys-38 contacts Zn(2+). Active-site charge relay system residues include Thr-40 and His-43. Zn(2+) contacts are provided by His-63, Glu-64, Cys-93, Cys-96, Cys-99, and Cys-107. Residues Ile-175, Asp-195, Arg-200, 262–264, and 286–287 each bind NAD(+); these read LGI and IY.

The protein belongs to the zinc-containing alcohol dehydrogenase family. As to quaternary structure, homotetramer. Zn(2+) is required as a cofactor.

The protein resides in the cytoplasm. It catalyses the reaction L-threonine + NAD(+) = (2S)-2-amino-3-oxobutanoate + NADH + H(+). Its pathway is amino-acid degradation; L-threonine degradation via oxydo-reductase pathway; glycine from L-threonine: step 1/2. Functionally, catalyzes the NAD(+)-dependent oxidation of L-threonine to 2-amino-3-ketobutyrate. This Paraburkholderia xenovorans (strain LB400) protein is L-threonine 3-dehydrogenase.